A 63-amino-acid chain; its full sequence is Small ribosomal subunit protein eS31 (63 aa).

Zn(2+) is bound by residues cysteine 31, cysteine 34, cysteine 50, and cysteine 53.

It belongs to the eukaryotic ribosomal protein eS31 family. As to quaternary structure, part of the 30S ribosomal subunit. Requires Zn(2+) as cofactor.

This chain is Small ribosomal subunit protein eS31 (rps27ae), found in Aeropyrum pernix (strain ATCC 700893 / DSM 11879 / JCM 9820 / NBRC 100138 / K1).